A 94-amino-acid polypeptide reads, in one-letter code: Putative pterin-4-alpha-carbinolamine dehydratase (94 aa).

Belongs to the pterin-4-alpha-carbinolamine dehydratase family.

The catalysed reaction is (4aS,6R)-4a-hydroxy-L-erythro-5,6,7,8-tetrahydrobiopterin = (6R)-L-erythro-6,7-dihydrobiopterin + H2O. This Mycobacterium avium (strain 104) protein is Putative pterin-4-alpha-carbinolamine dehydratase.